Reading from the N-terminus, the 374-residue chain is N5-carboxyaminoimidazole ribonucleotide synthase (374 aa).

ATP-binding positions include R108, K148, 153–159 (GYDGKGQ), 183–186 (EKYL), E191, H214, and 266–267 (NE). One can recognise an ATP-grasp domain in the interval 112 to 296 (KETLKSAGTK…QFDTHILAVT (185 aa)).

This sequence belongs to the PurK/PurT family. Homodimer.

It carries out the reaction 5-amino-1-(5-phospho-beta-D-ribosyl)imidazole + hydrogencarbonate + ATP = 5-carboxyamino-1-(5-phospho-D-ribosyl)imidazole + ADP + phosphate + 2 H(+). It participates in purine metabolism; IMP biosynthesis via de novo pathway; 5-amino-1-(5-phospho-D-ribosyl)imidazole-4-carboxylate from 5-amino-1-(5-phospho-D-ribosyl)imidazole (N5-CAIR route): step 1/2. In terms of biological role, catalyzes the ATP-dependent conversion of 5-aminoimidazole ribonucleotide (AIR) and HCO(3)(-) to N5-carboxyaminoimidazole ribonucleotide (N5-CAIR). The polypeptide is N5-carboxyaminoimidazole ribonucleotide synthase (Staphylococcus aureus (strain MRSA252)).